Reading from the N-terminus, the 326-residue chain is N-acetyl-gamma-glutamyl-phosphate reductase (326 aa).

Cys155 is an active-site residue.

Belongs to the NAGSA dehydrogenase family. Type 1 subfamily.

The protein resides in the cytoplasm. The catalysed reaction is N-acetyl-L-glutamate 5-semialdehyde + phosphate + NADP(+) = N-acetyl-L-glutamyl 5-phosphate + NADPH + H(+). It functions in the pathway amino-acid biosynthesis; L-arginine biosynthesis; N(2)-acetyl-L-ornithine from L-glutamate: step 3/4. Functionally, catalyzes the NADPH-dependent reduction of N-acetyl-5-glutamyl phosphate to yield N-acetyl-L-glutamate 5-semialdehyde. This chain is N-acetyl-gamma-glutamyl-phosphate reductase, found in Shewanella oneidensis (strain ATCC 700550 / JCM 31522 / CIP 106686 / LMG 19005 / NCIMB 14063 / MR-1).